The following is a 449-amino-acid chain: Glutamate--tRNA ligase 2 (449 aa).

The 'HIGH' region signature appears at 17–27; that stretch reads PSPTGFLHVGN. The short motif at 248 to 252 is the 'KMSKS' region element; it reads ALSKR. Lysine 251 is an ATP binding site.

The protein belongs to the class-I aminoacyl-tRNA synthetase family. Glutamate--tRNA ligase type 1 subfamily. In terms of assembly, monomer.

It localises to the cytoplasm. The catalysed reaction is tRNA(Glu) + L-glutamate + ATP = L-glutamyl-tRNA(Glu) + AMP + diphosphate. Catalyzes the attachment of glutamate to tRNA(Glu) in a two-step reaction: glutamate is first activated by ATP to form Glu-AMP and then transferred to the acceptor end of tRNA(Glu). This Jannaschia sp. (strain CCS1) protein is Glutamate--tRNA ligase 2.